The chain runs to 203 residues: Cytochrome c oxidase assembly protein CtaG (203 aa).

Over 1-19 (MDAGKAERRAGNGRRTDGR) the chain is Cytoplasmic. A helical; Signal-anchor for type II membrane protein transmembrane segment spans residues 20-42 (RHLVVAAACAAFIAAMVGVTYAS). Residues 43 to 203 (VPLYAMFCAL…AAARASGTGG (161 aa)) lie on the Periplasmic side of the membrane.

The protein belongs to the COX11/CtaG family.

The protein resides in the cell inner membrane. Its function is as follows. Exerts its effect at some terminal stage of cytochrome c oxidase synthesis, probably by being involved in the insertion of the copper B into subunit I. The polypeptide is Cytochrome c oxidase assembly protein CtaG (Xanthobacter autotrophicus (strain ATCC BAA-1158 / Py2)).